Reading from the N-terminus, the 227-residue chain is 2,3-bisphosphoglycerate-dependent phosphoglycerate mutase (227 aa).

Substrate is bound by residues 7–14 (RHGFSEWN), 20–21 (TG), Arg-59, 86–89 (ERHY), Lys-97, 113–114 (RR), and 182–183 (GN). Residue His-8 is the Tele-phosphohistidine intermediate of the active site. The Proton donor/acceptor role is filled by Glu-86.

This sequence belongs to the phosphoglycerate mutase family. BPG-dependent PGAM subfamily. In terms of assembly, homodimer.

The catalysed reaction is (2R)-2-phosphoglycerate = (2R)-3-phosphoglycerate. The protein operates within carbohydrate degradation; glycolysis; pyruvate from D-glyceraldehyde 3-phosphate: step 3/5. Its function is as follows. Catalyzes the interconversion of 2-phosphoglycerate and 3-phosphoglycerate. The sequence is that of 2,3-bisphosphoglycerate-dependent phosphoglycerate mutase from Haemophilus ducreyi (strain 35000HP / ATCC 700724).